Reading from the N-terminus, the 50-residue chain is U23-theraphotoxin-Cg1a 2 (50 aa).

3 disulfides stabilise this stretch: Cys22-Cys36, Cys29-Cys41, and Cys35-Cys47.

It belongs to the neurotoxin 10 (Hwtx-1) family. 64 (Jztx-20) subfamily. As to expression, expressed by the venom gland.

It is found in the secreted. Functionally, probable ion channel inhibitor. This Chilobrachys guangxiensis (Chinese earth tiger tarantula) protein is U23-theraphotoxin-Cg1a 2.